The chain runs to 72 residues: Large ribosomal subunit protein bL28 (72 aa).

This sequence belongs to the bacterial ribosomal protein bL28 family.

The polypeptide is Large ribosomal subunit protein bL28 (Chlorobium chlorochromatii (strain CaD3)).